A 360-amino-acid polypeptide reads, in one-letter code: Phenylalanine--tRNA ligase alpha subunit (360 aa).

Residue E260 participates in Mg(2+) binding.

Belongs to the class-II aminoacyl-tRNA synthetase family. Phe-tRNA synthetase alpha subunit type 1 subfamily. In terms of assembly, tetramer of two alpha and two beta subunits. Mg(2+) is required as a cofactor.

The protein localises to the cytoplasm. It carries out the reaction tRNA(Phe) + L-phenylalanine + ATP = L-phenylalanyl-tRNA(Phe) + AMP + diphosphate + H(+). The protein is Phenylalanine--tRNA ligase alpha subunit of Agrobacterium fabrum (strain C58 / ATCC 33970) (Agrobacterium tumefaciens (strain C58)).